A 29-amino-acid chain; its full sequence is Trypsin inhibitor 1 (29 aa).

Disulfide bonds link Cys-3–Cys-20, Cys-10–Cys-22, and Cys-16–Cys-28.

The protein belongs to the protease inhibitor I7 (squash-type serine protease inhibitor) family.

Its subcellular location is the secreted. In terms of biological role, inhibits trypsin. The protein is Trypsin inhibitor 1 of Cucurbita maxima (Pumpkin).